Consider the following 457-residue polypeptide: Multidrug resistance protein MdtK (457 aa).

The next 12 helical transmembrane spans lie at 11–31, 53–73, 93–113, 127–147, 160–180, 188–208, 243–263, 276–296, 314–334, 350–370, 387–407, and 418–438; these read LLALAIPVILAQVAQTAMGFV, IWLPAILFGHGLLLALTPVIA, WLAGFVSVLVMIVLWNAGYII, AVGYLRALLWGAPGYLFFQVA, GMVMGFLGLLVNIPVNYIFIY, LGGIGCGVATAAVYWVMFIAM, LPIALALFFEVTLFAVVALLV, IALNFSSLMFVLPMSLAAAVT, AARTGLGVGICMAVVTAIFTV, VVALAAQLMLLAAVYQISDSI, IFFITFTAYWVLGLPSGYILA, and PAGFWMGFIIGLTSAAVLMML.

Belongs to the multi antimicrobial extrusion (MATE) (TC 2.A.66.1) family. MdtK subfamily.

Its subcellular location is the cell inner membrane. In terms of biological role, multidrug efflux pump that functions probably as a Na(+)/drug antiporter. This Salmonella newport (strain SL254) protein is Multidrug resistance protein MdtK.